We begin with the raw amino-acid sequence, 210 residues long: Guanylate kinase (210 aa).

Residues glycine 5–glutamate 184 enclose the Guanylate kinase-like domain. Glycine 12 to glycine 19 provides a ligand contact to ATP.

This sequence belongs to the guanylate kinase family.

It localises to the cytoplasm. The enzyme catalyses GMP + ATP = GDP + ADP. In terms of biological role, essential for recycling GMP and indirectly, cGMP. The polypeptide is Guanylate kinase (Streptococcus mutans serotype c (strain ATCC 700610 / UA159)).